We begin with the raw amino-acid sequence, 261 residues long: 7beta-hydroxysteroid dehydrogenase (261 aa).

NADP(+) contacts are provided by residues 17-21 (TEGIG), 40-41 (RR), and 66-67 (DL). The active-site Proton acceptor is the Tyr156.

Belongs to the short-chain dehydrogenases/reductases (SDR) family. In terms of assembly, homodimer.

It catalyses the reaction a 7beta-hydroxysteroid + NADP(+) = a 7-oxosteroid + NADPH + H(+). It carries out the reaction ursocholate + NADP(+) = 3alpha,12alpha-dihydroxy-7-oxo-5beta-cholanate + NADPH + H(+). The catalysed reaction is 7-oxolithocholate + NADPH + H(+) = ursodeoxycholate + NADP(+). The enzyme catalyses 3alpha,7beta-dihydroxy-12-oxo-5beta-cholan-24-oate + NADP(+) = 7,12-dioxo-lithocholate + NADPH + H(+). It catalyses the reaction 7beta-hydroxy-3,12-dioxo-5beta-cholan-24-oate + NADP(+) = dehydrocholate + NADPH + H(+). In terms of biological role, 7beta-hydroxysteroid dehydrogenase that catalyzes the reduction of the 7-oxo group of 7-oxosteroids, such as 3alpha,12alpha-dihydroxy-7-oxo-5beta-cholanate, 7-oxolithocholate, 7,12-dioxo-lithocholate and dehydrocholate, to the corresponding 7beta-hydroxysteroids. Is also able to catalyze the reverse oxidation reactions. Together with 7alpha-HSDH encoded in the adjacent gene, is likely involved in the epimerization of the hydroxy group at C-7 of primary bile acids through 7-keto bile acid intermediates. The protein is 7beta-hydroxysteroid dehydrogenase of Clostridium sardiniense (Clostridium absonum).